Consider the following 561-residue polypeptide: Tectonic-like complex member MKS1 (561 aa).

A C2 B9-type domain is found at 314 to 442 (LRLFVNGEVV…TVSTWRPMEL (129 aa)).

As to quaternary structure, part of the tectonic-like complex (also named B9 complex). Interacts with TMEM107. Interacts with TCTN3, AHI1, TCTN1, TCTN2, CC2D2A. Interacts with FLNA. Interacts with TMEM67. Interacts with B9D1 and B9D2. As to expression, widely expressed in embryo at 15.5 dpc, with a relatively strong expression in brain, liver, kidney and digits of the upper limbs. Highly expressed in bronchiolar epithelium.

The protein resides in the cytoplasm. The protein localises to the cytoskeleton. It localises to the cilium basal body. It is found in the microtubule organizing center. Its subcellular location is the centrosome. Functionally, component of the tectonic-like complex, a complex localized at the transition zone of primary cilia and acting as a barrier that prevents diffusion of transmembrane proteins between the cilia and plasma membranes. Involved in centrosome migration to the apical cell surface during early ciliogenesis. Required for ciliary structure and function, including a role in regulating length and appropriate number through modulating centrosome duplication. Required for cell branching morphology. The chain is Tectonic-like complex member MKS1 (Mks1) from Mus musculus (Mouse).